The primary structure comprises 241 residues: Pyridoxine 5'-phosphate synthase (241 aa).

Asn7 provides a ligand contact to 3-amino-2-oxopropyl phosphate. Residue 9–10 (DH) coordinates 1-deoxy-D-xylulose 5-phosphate. Arg18 is a binding site for 3-amino-2-oxopropyl phosphate. His43 (proton acceptor) is an active-site residue. 1-deoxy-D-xylulose 5-phosphate contacts are provided by Arg45 and His50. Residue Glu70 is the Proton acceptor of the active site. Thr100 lines the 1-deoxy-D-xylulose 5-phosphate pocket. The active-site Proton donor is the His191. 3-amino-2-oxopropyl phosphate-binding positions include Gly192 and 213–214 (GH).

This sequence belongs to the PNP synthase family. In terms of assembly, homooctamer; tetramer of dimers.

The protein resides in the cytoplasm. It carries out the reaction 3-amino-2-oxopropyl phosphate + 1-deoxy-D-xylulose 5-phosphate = pyridoxine 5'-phosphate + phosphate + 2 H2O + H(+). It participates in cofactor biosynthesis; pyridoxine 5'-phosphate biosynthesis; pyridoxine 5'-phosphate from D-erythrose 4-phosphate: step 5/5. Catalyzes the complicated ring closure reaction between the two acyclic compounds 1-deoxy-D-xylulose-5-phosphate (DXP) and 3-amino-2-oxopropyl phosphate (1-amino-acetone-3-phosphate or AAP) to form pyridoxine 5'-phosphate (PNP) and inorganic phosphate. This Nostoc punctiforme (strain ATCC 29133 / PCC 73102) protein is Pyridoxine 5'-phosphate synthase.